The primary structure comprises 78 residues: Defensin-like protein 149 (78 aa).

The N-terminal stretch at 1–25 (MMKKLIQLSFTVMIIFTILVLGVVA) is a signal peptide. 4 cysteine pairs are disulfide-bonded: Cys-36-Cys-77, Cys-45-Cys-65, Cys-50-Cys-71, and Cys-54-Cys-73.

This sequence belongs to the DEFL family.

It localises to the secreted. In Arabidopsis thaliana (Mouse-ear cress), this protein is Defensin-like protein 149 (LCR5).